Here is a 67-residue protein sequence, read N- to C-terminus: ATP synthase F(0) complex subunit 8 (67 aa).

The helical transmembrane segment at 8-24 (TWFINIVSMILTLFIVF) threads the bilayer. Residue Lys-54 is modified to N6-acetyllysine; alternate. N6-succinyllysine; alternate is present on Lys-54. Lys-57 is modified (N6-acetyllysine).

The protein belongs to the ATPase protein 8 family. In terms of assembly, component of the ATP synthase complex composed at least of ATP5F1A/subunit alpha, ATP5F1B/subunit beta, ATP5MC1/subunit c (homooctomer), MT-ATP6/subunit a, MT-ATP8/subunit 8, ATP5ME/subunit e, ATP5MF/subunit f, ATP5MG/subunit g, ATP5MK/subunit k, ATP5MJ/subunit j, ATP5F1C/subunit gamma, ATP5F1D/subunit delta, ATP5F1E/subunit epsilon, ATP5PF/subunit F6, ATP5PB/subunit b, ATP5PD/subunit d, ATP5PO/subunit OSCP. ATP synthase complex consists of a soluble F(1) head domain (subunits alpha(3) and beta(3)) - the catalytic core - and a membrane F(0) domain - the membrane proton channel (subunits c, a, 8, e, f, g, k and j). These two domains are linked by a central stalk (subunits gamma, delta, and epsilon) rotating inside the F1 region and a stationary peripheral stalk (subunits F6, b, d, and OSCP). Interacts with PRICKLE3.

It is found in the mitochondrion membrane. Its function is as follows. Subunit 8, of the mitochondrial membrane ATP synthase complex (F(1)F(0) ATP synthase or Complex V) that produces ATP from ADP in the presence of a proton gradient across the membrane which is generated by electron transport complexes of the respiratory chain. ATP synthase complex consist of a soluble F(1) head domain - the catalytic core - and a membrane F(1) domain - the membrane proton channel. These two domains are linked by a central stalk rotating inside the F(1) region and a stationary peripheral stalk. During catalysis, ATP synthesis in the catalytic domain of F(1) is coupled via a rotary mechanism of the central stalk subunits to proton translocation. In vivo, can only synthesize ATP although its ATP hydrolase activity can be activated artificially in vitro. Part of the complex F(0) domain. This Equus asinus (Donkey) protein is ATP synthase F(0) complex subunit 8.